Consider the following 549-residue polypeptide: Urocanate hydratase (549 aa).

NAD(+) contacts are provided by residues 46–47, Q124, 170–172, E190, R195, 236–237, 257–261, 267–268, and Y316; these read GG, GMG, NA, QTSAH, and YV. C404 is an active-site residue. An NAD(+)-binding site is contributed by G486.

The protein belongs to the urocanase family. NAD(+) is required as a cofactor.

Its subcellular location is the cytoplasm. The enzyme catalyses 4-imidazolone-5-propanoate = trans-urocanate + H2O. It participates in amino-acid degradation; L-histidine degradation into L-glutamate; N-formimidoyl-L-glutamate from L-histidine: step 2/3. Catalyzes the conversion of urocanate to 4-imidazolone-5-propionate. In Natranaerobius thermophilus (strain ATCC BAA-1301 / DSM 18059 / JW/NM-WN-LF), this protein is Urocanate hydratase.